A 429-amino-acid chain; its full sequence is 3-oxo-tetronate kinase (429 aa).

ATP is bound by residues serine 268, 366-369 (GGET), and glycine 410.

This sequence belongs to the four-carbon acid sugar kinase family.

The catalysed reaction is 3-dehydro-L-erythronate + ATP = 3-dehydro-4-O-phospho-L-erythronate + ADP + H(+). It catalyses the reaction 3-dehydro-D-erythronate + ATP = 3-dehydro-4-O-phospho-D-erythronate + ADP + H(+). Catalyzes the ATP-dependent phosphorylation of 3-oxo-tetronate to 3-oxo-tetronate 4-phosphate. This chain is 3-oxo-tetronate kinase, found in Pseudomonas savastanoi pv. phaseolicola (strain 1448A / Race 6) (Pseudomonas syringae pv. phaseolicola (strain 1448A / Race 6)).